The sequence spans 248 residues: MRKAIIAGNWKMNKTVDEAVKVVEELKPLVKDATCDVVVCPTFVCLDAVKKATAGSNIKVAAQNMHFEESGAFTGEVAPGMLEAMGIEYVVLGHSERREYFNETDEAINKKVKAAFAHNITPIVCCGETLEQRESGVTNNFIACQIKVDIAGLTKEQAEKVVIAYEPIWAIGTGKTATKEQANETILAIRNVVVEMYGKEVADKVRIQYGGSVKPNTITEQMAMSDIDGALVGGASLKAEDFSGIVNY.

9–11 (NWK) lines the substrate pocket. The active-site Electrophile is the histidine 94. Catalysis depends on glutamate 166, which acts as the Proton acceptor. Substrate is bound by residues glycine 172, serine 212, and 233–234 (GG).

The protein belongs to the triosephosphate isomerase family. As to quaternary structure, homodimer.

It localises to the cytoplasm. It carries out the reaction D-glyceraldehyde 3-phosphate = dihydroxyacetone phosphate. The protein operates within carbohydrate biosynthesis; gluconeogenesis. Its pathway is carbohydrate degradation; glycolysis; D-glyceraldehyde 3-phosphate from glycerone phosphate: step 1/1. Its function is as follows. Involved in the gluconeogenesis. Catalyzes stereospecifically the conversion of dihydroxyacetone phosphate (DHAP) to D-glyceraldehyde-3-phosphate (G3P). The protein is Triosephosphate isomerase of Clostridium botulinum (strain Eklund 17B / Type B).